A 331-amino-acid chain; its full sequence is UDP-GalNAc:beta-1,3-N-acetylgalactosaminyltransferase 1 (331 aa).

The Cytoplasmic segment spans residues 1–20 (MASALWTVLPSRMSLRSLKW). The helical; Signal-anchor for type II membrane protein transmembrane segment at 21–43 (SLLLLSLLSFFVMWYLSLPHYNV) threads the bilayer. The Lumenal portion of the chain corresponds to 44–331 (IERVNWMYFY…VMLRNTTCHY (288 aa)). Asn-72, Asn-154, Asn-198, Asn-212, and Asn-326 each carry an N-linked (GlcNAc...) asparagine glycan.

Belongs to the glycosyltransferase 31 family. The cofactor is Mg(2+). In terms of tissue distribution, higher expression in heart and brain, and to a lesser extent in lung, placenta, kidney and testis. Lower expression in liver, spleen and stomach. No expression in skeletal muscle.

It localises to the golgi apparatus membrane. It catalyses the reaction a globoside Gb3Cer (d18:1(4E)) + UDP-N-acetyl-alpha-D-galactosamine = a globoside Gb4Cer (d18:1(4E)) + UDP + H(+). The protein operates within protein modification; protein glycosylation. Transfers N-acetylgalactosamine onto globotriaosylceramide. Plays a critical role in preimplantation stage embryonic development. The polypeptide is UDP-GalNAc:beta-1,3-N-acetylgalactosaminyltransferase 1 (Homo sapiens (Human)).